Here is a 361-residue protein sequence, read N- to C-terminus: Alcohol dehydrogenase 9 (361 aa).

Cys-51, Thr-53, His-73, Cys-104, Cys-107, Cys-110, Cys-118, and Cys-167 together coordinate Zn(2+). Residues Thr-53 and His-73 each contribute to the an alcohol site. Residue Thr-53 coordinates NAD(+). NAD(+) is bound by residues 192 to 197 (GLGGLG), Lys-221, 278 to 280 (LGA), and Lys-356.

Belongs to the zinc-containing alcohol dehydrogenase family. Class-III subfamily. Homodimer. Zn(2+) serves as cofactor.

This is Alcohol dehydrogenase 9 from Catharanthus roseus (Madagascar periwinkle).